A 330-amino-acid polypeptide reads, in one-letter code: MQGSVTEFLKPRLVDIEQISSTHAKVTLEPLERGFGHTLGNALRRILLSSMPGCAVIEVEIEGVLHEYSTKEGVQEDILEILLNLKGLAVRVAEGKDEVFITLNKSGSGPVVAGDITHDGDVEIANPEHVICHLTDDNAEIAMRIKVERGRGYVPASARIHNEEDERPIGRLLVDATYSPVDKIAYAVEAARVEQRTDLDKLVIDMETNGTLEPEEAIRRAATILAEQLDAFVDLRDVRVPEEKEEKPEFDPILLRPVDDLELTVRSANCLKAEAIHYIGDLVQRTEVELLKTPNLGKKSLTEIKDVLASRGLSLGMRLENWPPASIAED.

An alpha N-terminal domain (alpha-NTD) region spans residues 1-236 (MQGSVTEFLK…EQLDAFVDLR (236 aa)). Residues 250-330 (FDPILLRPVD…NWPPASIAED (81 aa)) are alpha C-terminal domain (alpha-CTD).

This sequence belongs to the RNA polymerase alpha chain family. As to quaternary structure, homodimer. The RNAP catalytic core consists of 2 alpha, 1 beta, 1 beta' and 1 omega subunit. When a sigma factor is associated with the core the holoenzyme is formed, which can initiate transcription.

It carries out the reaction RNA(n) + a ribonucleoside 5'-triphosphate = RNA(n+1) + diphosphate. DNA-dependent RNA polymerase catalyzes the transcription of DNA into RNA using the four ribonucleoside triphosphates as substrates. The chain is DNA-directed RNA polymerase subunit alpha from Vibrio campbellii (strain ATCC BAA-1116).